The primary structure comprises 345 residues: Dimethyladenosine transferase 1, mitochondrial (345 aa).

The transit peptide at Met-1–Leu-27 directs the protein to the mitochondrion. 7 residues coordinate S-adenosyl-L-methionine: Leu-38, Gly-63, Glu-85, Lys-86, Asp-111, Val-112, and Asn-141.

It belongs to the class I-like SAM-binding methyltransferase superfamily. rRNA adenine N(6)-methyltransferase family. KsgA subfamily. As to quaternary structure, interacts with mitochondrial RNA polymerase POLRMT. Interacts with TFAM. Remains bound to the maturing mtSSU until the late stages of assembly. As to expression, ubiquitously expressed.

It localises to the mitochondrion. It catalyses the reaction adenosine(N)/adenosine(N+1) in rRNA + 4 S-adenosyl-L-methionine = N(6)-dimethyladenosine(N)/N(6)-dimethyladenosine(N+1) in rRNA + 4 S-adenosyl-L-homocysteine + 4 H(+). Mitochondrial methyltransferase which uses S-adenosyl methionine to dimethylate two highly conserved adjacent adenosine residues (A1006 and A1007) within the loop of helix 45 at the 3-prime end of 12S rRNA, thereby regulating the assembly or stability of the small subunit of the mitochondrial ribosome. Also required for basal transcription of mitochondrial DNA, probably via its interaction with POLRMT and TFAM. Stimulates transcription independently of the methyltransferase activity. This Mus musculus (Mouse) protein is Dimethyladenosine transferase 1, mitochondrial (Tfb1m).